A 148-amino-acid polypeptide reads, in one-letter code: Angiogenin-1 (148 aa).

An N-terminal signal peptide occupies residues 1 to 23 (MVMVLSPLLLVFILGLGLTPVAP). H37 acts as the Proton acceptor in catalysis. A tRNA-binding site is contributed by R45. 3 disulfide bridges follow: C50–C105, C63–C116, and C81–C131. A Nucleolar localization signal motif is present at residues 55–59 (KNRRL). Positions 105 and 127 each coordinate tRNA. Residue H138 is the Proton donor of the active site.

The protein belongs to the pancreatic ribonuclease family. Homodimer. Interacts with RNH1; inhibiting ANG ribonuclease activity. In terms of tissue distribution, serum and milk.

The protein localises to the secreted. Its subcellular location is the nucleus. It localises to the nucleolus. It is found in the cytoplasm. The protein resides in the stress granule. In terms of biological role, secreted ribonuclease that can either promote or restrict cell proliferation of target cells, depending on the context. Endocytosed in target cells via its receptor PLXNB2 and translocates to the cytoplasm or nucleus. Under stress conditions, localizes to the cytoplasm and promotes the assembly of stress granules (SGs): specifically cleaves a subset of tRNAs within anticodon loops to produce tRNA-derived stress-induced fragments (tiRNAs), resulting in translation repression and inhibition of cell proliferation. tiRNas also prevent formation of apoptosome, thereby promoting cell survival. Preferentially cleaves RNAs between a pyrimidine and an adenosine residue, suggesting that it cleaves the anticodon loop of tRNA(Ala) (32-UUAGCAU-38) after positions 33 and 36. Cleaves a subset of tRNAs, including tRNA(Ala), tRNA(Glu), tRNA(Gly), tRNA(Lys), tRNA(Val), tRNA(His), tRNA(Asp) and tRNA(Sec). Under growth conditions and in differentiated cells, translocates to the nucleus and stimulates ribosomal RNA (rRNA) transcription, including that containing the initiation site sequences of 45S rRNA, thereby promoting cell growth and proliferation. Angiogenin induces vascularization of normal and malignant tissues via its ability to promote rRNA transcription. This chain is Angiogenin-1 (ANG1), found in Bos taurus (Bovine).